We begin with the raw amino-acid sequence, 273 residues long: NAD-dependent protein deacylase (273 aa).

Positions 20-272 (RERLRQRIFF…PEFVEKLLEG (253 aa)) constitute a Deacetylase sirtuin-type domain. NAD(+) is bound at residue 48–67 (GAGISAESGIRTFRAADGLW). Residues Y92 and R95 each contribute to the substrate site. An NAD(+)-binding site is contributed by 129-132 (QNID). The active-site Proton acceptor is H147. Zn(2+) contacts are provided by C155 and C174. NAD(+)-binding positions include 214 to 216 (GTS), 240 to 242 (NLE), and A258.

Belongs to the sirtuin family. Class III subfamily. Zn(2+) is required as a cofactor.

The protein resides in the cytoplasm. It catalyses the reaction N(6)-acetyl-L-lysyl-[protein] + NAD(+) + H2O = 2''-O-acetyl-ADP-D-ribose + nicotinamide + L-lysyl-[protein]. The enzyme catalyses N(6)-succinyl-L-lysyl-[protein] + NAD(+) + H2O = 2''-O-succinyl-ADP-D-ribose + nicotinamide + L-lysyl-[protein]. The catalysed reaction is N(6)-(2-hydroxyisobutanoyl)-L-lysyl-[protein] + NAD(+) + H2O = 2''-O-(2-hydroxyisobutanoyl)-ADP-D-ribose + nicotinamide + L-lysyl-[protein]. In terms of biological role, NAD-dependent lysine deacetylase that specifically removes acetyl groups on target proteins. Also acts as a protein-lysine deacylase by mediating protein desuccinylation and de-2-hydroxyisobutyrylation. Modulates the activities of several proteins which are inactive in their acylated form. This is NAD-dependent protein deacylase from Shigella flexneri.